The following is a 756-amino-acid chain: 5-methyltetrahydropteroyltriglutamate--homocysteine methyltransferase (756 aa).

Residues 16–19 (RELK) and Lys112 contribute to the 5-methyltetrahydropteroyltri-L-glutamate site. Residues 432 to 434 (IGS) and Glu485 each bind L-homocysteine. L-methionine contacts are provided by residues 432–434 (IGS) and Glu485. 5-methyltetrahydropteroyltri-L-glutamate contacts are provided by residues 516–517 (RC) and Trp562. Residue Asp600 coordinates L-homocysteine. Asp600 contacts L-methionine. Glu606 serves as a coordination point for 5-methyltetrahydropteroyltri-L-glutamate. His642, Cys644, and Glu666 together coordinate Zn(2+). His695 functions as the Proton donor in the catalytic mechanism. Cys727 is a Zn(2+) binding site.

Belongs to the vitamin-B12 independent methionine synthase family. The cofactor is Zn(2+).

It catalyses the reaction 5-methyltetrahydropteroyltri-L-glutamate + L-homocysteine = tetrahydropteroyltri-L-glutamate + L-methionine. It functions in the pathway amino-acid biosynthesis; L-methionine biosynthesis via de novo pathway; L-methionine from L-homocysteine (MetE route): step 1/1. Its function is as follows. Catalyzes the transfer of a methyl group from 5-methyltetrahydrofolate to homocysteine resulting in methionine formation. This chain is 5-methyltetrahydropteroyltriglutamate--homocysteine methyltransferase, found in Haemophilus influenzae (strain PittEE).